A 205-amino-acid polypeptide reads, in one-letter code: Mediator of RNA polymerase II transcription subunit 29 (205 aa).

Low complexity predominate over residues 1 to 27 (MNPNMNMMQMSGPPMMQVSPMMQSSPQ). Residues 1 to 65 (MNPNMNMMQM…QQQQQQAEKL (65 aa)) are disordered. Residues 28 to 38 (PMMPTGPPGPV) are compositionally biased toward pro residues. Residues 39–61 (PMQQQHQQQQQQQQQQQQQQQQQ) are compositionally biased toward low complexity.

The protein belongs to the Mediator complex subunit 29 family. In terms of assembly, component of the Mediator complex.

The protein localises to the nucleus. In terms of biological role, component of the Mediator complex, a coactivator involved in the regulated transcription of nearly all RNA polymerase II-dependent genes. Mediator functions as a bridge to convey information from gene-specific regulatory proteins to the basal RNA polymerase II transcription machinery. Mediator is recruited to promoters by direct interactions with regulatory proteins and serves as a scaffold for the assembly of a functional preinitiation complex with RNA polymerase II and the general transcription factors. The polypeptide is Mediator of RNA polymerase II transcription subunit 29 (ix) (Drosophila virilis (Fruit fly)).